A 159-amino-acid chain; its full sequence is Transcriptional repressor NrdR (159 aa).

A zinc finger lies at 3–34 (CPFCRHDDTQVVDSRVSEDGAAIRRRRRCSAC). The ATP-cone domain maps to 49-139 (PAVVKKDGSR…VYRRFEDVSE (91 aa)).

This sequence belongs to the NrdR family. It depends on Zn(2+) as a cofactor.

Negatively regulates transcription of bacterial ribonucleotide reductase nrd genes and operons by binding to NrdR-boxes. The chain is Transcriptional repressor NrdR from Burkholderia thailandensis (strain ATCC 700388 / DSM 13276 / CCUG 48851 / CIP 106301 / E264).